Here is a 409-residue protein sequence, read N- to C-terminus: Forkhead box protein A2 (409 aa).

Residues 150 to 241 constitute a DNA-binding region (fork-head); sequence AKPPYSYISL…GNMFENGCYL (92 aa). Positions 250–262 are enriched in basic and acidic residues; that stretch reads DKKLSKDPSRKTS. The segment at 250–315 is disordered; it reads DKKLSKDPSR…AASPTSQAQH (66 aa). Over residues 263-286 the composition is skewed to low complexity; that stretch reads EGGSNSSSESCNGNESPHSNSSSN.

The protein resides in the nucleus. In terms of biological role, may play a crucial role in specification of both the axial mesendoderm and the ventral nervous system. The sequence is that of Forkhead box protein A2 (foxa2) from Danio rerio (Zebrafish).